The primary structure comprises 68 residues: Putative protein YfaH (68 aa).

The chain is Putative protein YfaH (yfaH) from Escherichia coli (strain K12).